The primary structure comprises 312 residues: Small ribosomal subunit protein uS2 (312 aa).

Belongs to the universal ribosomal protein uS2 family.

The sequence is that of Small ribosomal subunit protein uS2 from Ruthia magnifica subsp. Calyptogena magnifica.